We begin with the raw amino-acid sequence, 1827 residues long: Chromodomain-helicase-DNA-binding protein 2 (1827 aa).

Basic and acidic residues predominate over residues Met1–Ser14. The tract at residues Met1–Glu264 is disordered. Positions Leu15–Ser75 are enriched in low complexity. Composition is skewed to basic and acidic residues over residues Glu81–Glu101, Ser115–Ala128, and Lys146–Pro155. The segment covering Gly175–Lys204 has biased composition (basic residues). Ser207 and Ser208 each carry phosphoserine. A compositionally biased stretch (acidic residues) spans Glu234 to Asp258. Thr240 is subject to Phosphothreonine. The residue at position 242 (Ser242) is a Phosphoserine. Chromo domains follow at residues Glu261 to Gly353 and Gln378 to Arg456. Residues Ala496 to Glu666 form the Helicase ATP-binding domain. Asp509–Thr516 provides a ligand contact to ATP. The DEAH box signature appears at Asp617–His620. A Helicase C-terminal domain is found at Leu795 to Thr946. 4 disordered regions span residues Glu1030–Arg1124, Gly1329–Asp1465, His1556–Gly1638, and His1679–Thr1827. Over residues Glu1037–Glu1065 the composition is skewed to basic and acidic residues. A phosphoserine mark is found at Ser1085, Ser1087, Ser1365, and Ser1386. Basic and acidic residues predominate over residues Lys1347–Asn1371. Basic and acidic residues-rich tracts occupy residues Glu1396 to Asp1431 and Glu1565 to Gly1574. The CHD1 helical C-terminal domain (CHCT) stretch occupies residues Leu1464–Gln1566. Positions Ser1584 to Leu1601 are enriched in polar residues. Basic and acidic residues-rich tracts occupy residues Arg1697 to His1719, Gln1738 to Pro1748, Asp1759 to Glu1771, and Ser1794 to Glu1813. Ser1806 carries the phosphoserine modification.

Interacts with MYOD1. Interacts with histone H3.3. As to expression, widely expressed.

The protein resides in the nucleus. The enzyme catalyses ATP + H2O = ADP + phosphate + H(+). ATP-dependent chromatin-remodeling factor that specifically binds to the promoter of target genes, leading to chromatin remodeling, possibly by promoting deposition of histone H3.3. Involved in myogenesis via interaction with MYOD1: binds to myogenic gene regulatory sequences and mediates incorporation of histone H3.3 prior to the onset of myogenic gene expression, promoting their expression. This Mus musculus (Mouse) protein is Chromodomain-helicase-DNA-binding protein 2 (Chd2).